We begin with the raw amino-acid sequence, 163 residues long: Protein VASCULATURE COMPLEXITY AND CONNECTIVITY (163 aa).

Residues 1–27 (MTKIGGILVCLVIVGLDVAAAILGIQA) form the signal peptide. 3 helical membrane passes run 54–74 (LGLGAAAILVMAHVLLNLVGG), 95–115 (MACLVLTWIVFAVGFGSIVIG), and 133–153 (FLSIGGILCFLHALFCVAYYV).

It belongs to the DESIGUAL family. In terms of assembly, interacts with OPS. In terms of tissue distribution, expressed in vascular cells, mostly in hypocotyls, and, to a lower extent, in seedlings, roots, flowers, siliques, developing leaves and inflorescences, but barely in mature leaves and seeds. High levels in leaf primordia.

The protein localises to the endoplasmic reticulum membrane. Functionally, required, together with OPS, for embryo provasculature development and cotyledon vascular complexity and connectivity. Necessary, partially redundantly with DEAL2 and DEAL3, to ensure bilateral symmetry development and early leaf margin patterning, probably via the regulation of auxin and CUC2 distribution. Regulates cell proliferation but not cell expansion. The chain is Protein VASCULATURE COMPLEXITY AND CONNECTIVITY from Arabidopsis thaliana (Mouse-ear cress).